Consider the following 87-residue polypeptide: UPF0213 protein SSA_0709 (87 aa).

A GIY-YIG domain is found at N3–A78.

This sequence belongs to the UPF0213 family.

This is UPF0213 protein SSA_0709 from Streptococcus sanguinis (strain SK36).